The sequence spans 326 residues: Polycomb complex protein BMI-1 (326 aa).

An RING-type zinc finger spans residues 18-57; it reads CVLCGGYFIDATTIIECLHSFCKTCIVRYLETSKYCPICD. The Nuclear localization signal motif lies at 81-95; that stretch reads KLVPGLFKNEMKRRR. An interaction with PHC2 region spans residues 162-182; sequence RYLRCPAAMTVMHLRKFLRSK. The tract at residues 164–228 is interaction with E4F1; it reads LRCPAAMTVM…GPLPLKYRVR (65 aa). A disordered region spans residues 236-326; it reads ISHQRDGLTN…VNGSSATSSG (91 aa). Positions 266–278 are enriched in low complexity; sequence PSTSSCLPSPSTP. The span at 279–309 shows a compositional bias: polar residues; the sequence is VQSPHPQFPHISSTMNGTSNSPSGNHQSSFA. The span at 315 to 326 shows a compositional bias: low complexity; sequence SSVNGSSATSSG.

In terms of assembly, component of a PRC1-like complex. Identified in a PRC1-like HPRC-H complex with CBX2, CBX4, CBX8, PHC1, PHC2, PHC3 RING1 and RNF2. Interacts with RNF2/RING2. Interacts with RING1. Part of a complex that contains RNF2, UB2D3 and BMI1, where RNF2 and BMI1 form a tight heterodimer, and UB2D3 interacts only with RNF2. The complex composed of RNF2, UB2D3 and BMI1 binds nucleosomes, and has activity only with nucleosomal histone H2A. Interacts with CBX7 and CBX8. Interacts with SPOP. Part of a complex consisting of BMI1, CUL3 and SPOP. Interacts with E4F1. Interacts with PHC2. Interacts with zinc finger protein ZNF277. May be part of a complex including at least ZNF277, BMI1 and RNF2/RING2. Monoubiquitinated. May be polyubiquitinated; which does not lead to proteasomal degradation.

The protein localises to the nucleus. It localises to the cytoplasm. Functionally, component of a Polycomb group (PcG) multiprotein PRC1-like complex, a complex class required to maintain the transcriptionally repressive state of many genes, including Hox genes, throughout development. PcG PRC1 complex acts via chromatin remodeling and modification of histones; it mediates monoubiquitination of histone H2A 'Lys-119', rendering chromatin heritably changed in its expressibility. The complex composed of RNF2, UB2D3 and BMI1 binds nucleosomes, and has activity only with nucleosomal histone H2A. In the PRC1-like complex, regulates the E3 ubiquitin-protein ligase activity of RNF2/RING2. The sequence is that of Polycomb complex protein BMI-1 (BMI1) from Homo sapiens (Human).